Consider the following 501-residue polypeptide: Cytochrome P450 6j1 (501 aa).

Cys444 contacts heme.

Belongs to the cytochrome P450 family. Heme serves as cofactor.

Its subcellular location is the endoplasmic reticulum membrane. The protein resides in the microsome membrane. In Blattella germanica (German cockroach), this protein is Cytochrome P450 6j1 (CYP6J1).